Here is a 382-residue protein sequence, read N- to C-terminus: Per os infectivity factor 2 (382 aa).

Forms the PIF complex together with PIF1 and PIF3. The complex also interacts with per os infectivity factor PIF0.

In terms of biological role, per os infectivity factor that mediates the specific binding of occluded virions (ODV) to the host midgut target cells. This chain is Per os infectivity factor 2, found in Autographa californica nuclear polyhedrosis virus (AcMNPV).